The chain runs to 72 residues: Translation initiation factor IF-1 (72 aa).

The S1-like domain maps to 1-72 (MSKEEVLEFS…TKGRITYRYK (72 aa)).

Belongs to the IF-1 family. In terms of assembly, component of the 30S ribosomal translation pre-initiation complex which assembles on the 30S ribosome in the order IF-2 and IF-3, IF-1 and N-formylmethionyl-tRNA(fMet); mRNA recruitment can occur at any time during PIC assembly.

The protein resides in the cytoplasm. In terms of biological role, one of the essential components for the initiation of protein synthesis. Stabilizes the binding of IF-2 and IF-3 on the 30S subunit to which N-formylmethionyl-tRNA(fMet) subsequently binds. Helps modulate mRNA selection, yielding the 30S pre-initiation complex (PIC). Upon addition of the 50S ribosomal subunit IF-1, IF-2 and IF-3 are released leaving the mature 70S translation initiation complex. The protein is Translation initiation factor IF-1 of Bartonella tribocorum (strain CIP 105476 / IBS 506).